A 403-amino-acid chain; its full sequence is Cytochrome P450 monooxygenase ustC (403 aa).

The signal sequence occupies residues 1 to 18; the sequence is MSPFIFAVTLTFAILALG. Residues Asn-52 and Asn-92 are each glycosylated (N-linked (GlcNAc...) asparagine). Cys-318 lines the heme pocket.

Belongs to the cytochrome P450 family. The cofactor is heme.

It functions in the pathway mycotoxin biosynthesis. Cytochrome P450 monooxygenase; part of the gene cluster that mediates the biosynthesis of the secondary metabolite ustiloxin B, an antimitotic tetrapeptide. First, ustA is processed by the subtilisin-like endoprotease Kex2 that is outside the ustiloxin B gene cluster, at the C-terminal side of Arg-Lys, after transfer to Golgi apparatus through the endoplasmic reticulum (ER). Cleavage by KEX2 generates 16 peptides YAIG-I to YAIG-XVI. To process the precursor peptide further, at least two peptidases are necessary to cleave the N-terminal and C-terminal sides of the Tyr-Ala-Ile-Gly core peptide which serves as backbone for the synthesis of ustiloxin B, through cyclization and modification of the tyrosine with a non-protein coding amino acid, norvaline. One of the two peptidases must be the serine peptidase ustP; and the other pepdidase is probably ustH. Macrocyclization of the core peptide derived from ustA requires the tyrosinase ustQ, as well as the homologous oxidases ustYa and ustYb, and leads to the production of the first cyclization product N-desmethylustiloxin F. For the formation of N-desmethylustiloxin F, three oxidation steps are required, hydroxylation at the benzylic position, hydroxylation at either the aromatic ring of Tyr or beta-position of Ile, and oxidative cyclization. UstQ may catalyze the oxidation of a phenol moiety, whereas the ustYa and ustYb are most likely responsible for the remaining two-step oxidations. N-desmethylustiloxin F is then methylated by ustM to yield ustiloxin F which in turn substrate of the cytochrome P450 monooxygenase ustC which catalyzes the formation of S-deoxyustiloxin H. The flavoprotein monooxygenases ustF1 and ustF2 then participate in the modification of the side chain of S-deoxyustiloxin H, leading to the synthesis of an oxime intermediate, via ustiloxin H. Finally, carboxylative dehydration performed by the cysteine desulfurase-like protein ustD yields ustiloxin B. In Aspergillus flavus (strain ATCC 200026 / FGSC A1120 / IAM 13836 / NRRL 3357 / JCM 12722 / SRRC 167), this protein is Cytochrome P450 monooxygenase ustC.